We begin with the raw amino-acid sequence, 161 residues long: uncharacterized protein (161 aa).

It belongs to the sapovirus VP3 family.

This is an uncharacterized protein from Sapporo virus (isolate GI/Human/Germany/pJG-Sap01) (Hu/Dresden/pJG-Sap01/DE).